The chain runs to 192 residues: Ribosomal RNA small subunit methyltransferase G (192 aa).

Residues Gly63, Leu68, 112-113 (IE), and Arg125 each bind S-adenosyl-L-methionine.

This sequence belongs to the methyltransferase superfamily. RNA methyltransferase RsmG family.

The protein localises to the cytoplasm. It carries out the reaction guanosine(527) in 16S rRNA + S-adenosyl-L-methionine = N(7)-methylguanosine(527) in 16S rRNA + S-adenosyl-L-homocysteine. Specifically methylates the N7 position of guanine in position 527 of 16S rRNA. The polypeptide is Ribosomal RNA small subunit methyltransferase G (Rickettsia rickettsii (strain Iowa)).